Reading from the N-terminus, the 322-residue chain is MARDKIALIGSGQIGGTLAHLVGLKELGDVVMFDIAEGIPQGKSLDIAQSSPVDGFDAKFTGANSYEAIEGARVVIVTAGVPRKPGMSRDDLLSINLKVMEQVGAGIKKYAPDAFVICITNPLDAMVWALQKASGLPHRKVVGMAGVLDSARFRYFLADEFNVSVEDVTAFVLGGHGDTMVPLVKYSTVAGIPLPDLVKMGWTSQARLDEIVDRTRNGGAEIVNLLKTGSAFYAPAASAIAMAESYLKDKKRVVPVAAYLNGEYGVKDMYVGVPVVIGDKGVERIVEIELAGKDREAFDKSVAAVQGLVEACKKIAPELLGH.

NAD(+) contacts are provided by residues 10-15 and aspartate 34; that span reads GSGQIG. Residues arginine 83 and arginine 89 each coordinate substrate. NAD(+) contacts are provided by residues asparagine 96 and 119–121; that span reads ITN. Substrate is bound by residues asparagine 121 and arginine 152. The active-site Proton acceptor is histidine 176.

Belongs to the LDH/MDH superfamily. MDH type 3 family.

It carries out the reaction (S)-malate + NAD(+) = oxaloacetate + NADH + H(+). In terms of biological role, catalyzes the reversible oxidation of malate to oxaloacetate. In Rhodopseudomonas palustris (strain BisB18), this protein is Malate dehydrogenase 1.